A 325-amino-acid polypeptide reads, in one-letter code: UDP-N-acetylglucosamine transporter (325 aa).

Transmembrane regions (helical) follow at residues 8 to 24 (VSLG…VLTM), 42 to 58 (AVVV…ILLV), 138 to 154 (VYQW…VAFV), 173 to 189 (FVGL…SGFA), 209 to 225 (IQLG…GVYI), 246 to 262 (IVVV…AAVI), 268 to 284 (ILKG…STLI), and 295 to 311 (TSVF…ATFL).

It belongs to the nucleotide-sugar transporter family. SLC35A subfamily. As to quaternary structure, interacts with SLC35A2; the interaction is reduced in the presence of SLC35A4. Found in a complex with SLC35A2 and SLC35A4. Interacts with MGAT4B. In terms of processing, O-Glcnacylation regulates the stability of SLC35A3 and the specific complex formation with MGAT4B.

It localises to the golgi apparatus membrane. It catalyses the reaction UMP(out) + UDP-N-acetyl-alpha-D-glucosamine(in) = UMP(in) + UDP-N-acetyl-alpha-D-glucosamine(out). Its function is as follows. Transports diphosphate-N-acetylglucosamine (UDP-GlcNAc) from the cytosol into the lumen of the Golgi apparatus, functioning as an antiporter that exchanges UDP-N-acetyl-alpha-D-glucosamine for UMP. May supply UDP-GlcNAc as substrate for Golgi-resident glycosyltransferases that generate highly branched, multiantennary complex N-glycans and keratan sulfate. However, the exact role of SLC35A3 still needs to be elucidated, it could be a member of a catalytically more efficient multiprotein complex rather than function independently as a single transporter. The polypeptide is UDP-N-acetylglucosamine transporter (SLC35A3) (Homo sapiens (Human)).